Here is a 140-residue protein sequence, read N- to C-terminus: Small ribosomal subunit protein uS12 (140 aa).

D103 carries the 3-methylthioaspartic acid modification. Positions 120 to 140 (GVQKRMQARSKYGAKRPKKGK) are disordered. Over residues 125–140 (MQARSKYGAKRPKKGK) the composition is skewed to basic residues.

Belongs to the universal ribosomal protein uS12 family. Part of the 30S ribosomal subunit. Contacts proteins S8 and S17. May interact with IF1 in the 30S initiation complex.

In terms of biological role, with S4 and S5 plays an important role in translational accuracy. Functionally, interacts with and stabilizes bases of the 16S rRNA that are involved in tRNA selection in the A site and with the mRNA backbone. Located at the interface of the 30S and 50S subunits, it traverses the body of the 30S subunit contacting proteins on the other side and probably holding the rRNA structure together. The combined cluster of proteins S8, S12 and S17 appears to hold together the shoulder and platform of the 30S subunit. The polypeptide is Small ribosomal subunit protein uS12 (Desulfitobacterium hafniense (strain Y51)).